Reading from the N-terminus, the 548-residue chain is Protein NRT1/ PTR FAMILY 2.4 (548 aa).

12 helical membrane passes run 29 to 49, 65 to 85, 88 to 108, 136 to 156, 172 to 192, 200 to 220, 316 to 336, 354 to 374, 393 to 413, 429 to 449, 468 to 488, and 508 to 528; these read TLLGMSITYFGWVMNLIVFLI, IVNGVVNMLPVVAAILADSFF, IPVISASAFISLTGISLLTLI, ILYAALALVITGTAGTRFILA, FFNWYFFTLYGGAITGTTAIV, WKLGFGLCVAANLISFIIFVA, LVPLWTSVMFLSAPLAVQMSM, VSAGSMQVIALVSGCVFIILN, LQKVGIGHVLTILSMAISAVV, VLWLVPALVINGIGEAFHFPA, SLTSVVMGISFYLSTALIDVI, and YLVLVIIGVSNFGYFLVCSWF.

This sequence belongs to the major facilitator superfamily. Proton-dependent oligopeptide transporter (POT/PTR) (TC 2.A.17) family. Strongly expressed in the root stele.

Its subcellular location is the membrane. In terms of biological role, transporter involved in a passive nitrate efflux. This Arabidopsis thaliana (Mouse-ear cress) protein is Protein NRT1/ PTR FAMILY 2.4 (NPF2.4).